The chain runs to 625 residues: RecQ-mediated genome instability protein 1 (625 aa).

At Met-1 the chain carries N-acetylmethionine. Ser-225 carries the phosphoserine modification. The tract at residues 257–282 (LTANNDTSSERCFTTGSSSNTIPTRQ) is disordered. Residues Ser-284 and Ser-292 each carry the phosphoserine modification. Glycyl lysine isopeptide (Lys-Gly) (interchain with G-Cter in SUMO2) cross-links involve residues Lys-334, Lys-387, and Lys-426.

Belongs to the RMI1 family. As to quaternary structure, component of the RMI complex, containing at least TOP3A, RMI1 and RMI2. The RMI complex interacts with BLM. Directly interacts with RMI2 and TOP3A. May bind DHJ. Interacts (via N-terminal region) with BLM; the interaction is direct.

The protein localises to the nucleus. In terms of biological role, essential component of the RMI complex, a complex that plays an important role in the processing of homologous recombination intermediates to limit DNA crossover formation in cells. Promotes TOP3A binding to double Holliday junctions (DHJ) and hence stimulates TOP3A-mediated dissolution. Required for BLM phosphorylation during mitosis. Within the BLM complex, required for BLM and TOP3A stability. The chain is RecQ-mediated genome instability protein 1 (RMI1) from Homo sapiens (Human).